Here is a 437-residue protein sequence, read N- to C-terminus: Serine--tRNA ligase (437 aa).

244–246 provides a ligand contact to L-serine; the sequence is TAE. Residue 275–277 participates in ATP binding; the sequence is RSE. Residue glutamate 298 participates in L-serine binding. 362-365 contacts ATP; the sequence is EISS. Serine 397 lines the L-serine pocket.

The protein belongs to the class-II aminoacyl-tRNA synthetase family. Type-1 seryl-tRNA synthetase subfamily. As to quaternary structure, homodimer. The tRNA molecule binds across the dimer.

Its subcellular location is the cytoplasm. The catalysed reaction is tRNA(Ser) + L-serine + ATP = L-seryl-tRNA(Ser) + AMP + diphosphate + H(+). It catalyses the reaction tRNA(Sec) + L-serine + ATP = L-seryl-tRNA(Sec) + AMP + diphosphate + H(+). It functions in the pathway aminoacyl-tRNA biosynthesis; selenocysteinyl-tRNA(Sec) biosynthesis; L-seryl-tRNA(Sec) from L-serine and tRNA(Sec): step 1/1. Its function is as follows. Catalyzes the attachment of serine to tRNA(Ser). Is also able to aminoacylate tRNA(Sec) with serine, to form the misacylated tRNA L-seryl-tRNA(Sec), which will be further converted into selenocysteinyl-tRNA(Sec). The chain is Serine--tRNA ligase from Nitrosomonas europaea (strain ATCC 19718 / CIP 103999 / KCTC 2705 / NBRC 14298).